Here is a 695-residue protein sequence, read N- to C-terminus: Hypersensitivity response secretion protein HrpI (695 aa).

The next 7 membrane-spanning stretches (helical) occupy residues 21–38 (LVGAFFVIAIVFMMITPL), 45–61 (VLIAVNICISCLLIMLA), 68–92 (LAFSTFPAVLLLTTMFRLALSVSTT), 111–135 (FVVGGNLAVGLVIFLILTVVNFLVI), 203–223 (AIASLIIVAINMIGGISIGVL), 244–262 (GLIAQIPALLISVTSGMII), and 311–327 (VFITIAIICGAGGLLQL).

It belongs to the FHIPEP (flagella/HR/invasion proteins export pore) family.

The protein localises to the cell inner membrane. Functionally, involved in the secretion of harpin-pss; a proteinaceous elicitor of the hypersensitivity response in plants. In Pseudomonas syringae pv. syringae, this protein is Hypersensitivity response secretion protein HrpI (hrpI).